A 2388-amino-acid chain; its full sequence is Hybrid signal transduction histidine kinase M (2388 aa).

Disordered regions lie at residues 1–32 (MSNY…NNFN), 42–61 (FNTP…NSIS), 69–111 (NECN…STPI), 123–209 (NRSN…NAYP), 237–337 (TLLN…SPKL), 361–421 (SPHG…YNDN), 430–449 (TRNT…SSSF), and 486–542 (IYTP…NNNE). The segment covering 69-82 (NECNSGGEQSPKIK) has biased composition (polar residues). Composition is skewed to low complexity over residues 83 to 110 (TNNN…KSTP), 125 to 206 (SNLN…SNSN), and 242 to 288 (SSNN…NNGG). Polar residues predominate over residues 293 to 306 (QFISSDNKYNTVGN). Residues 309 to 322 (HHHHHHQLHNHRHS) show a composition bias toward basic residues. Composition is skewed to low complexity over residues 325–337 (QGSS…SPKL), 361–399 (SPHG…NQNN), 410–419 (NNSNDSFDYN), and 432–449 (NTGY…SSSF). Pro residues predominate over residues 489 to 505 (PPYPQPYPQPPQLPPPS). Low complexity predominate over residues 506 to 541 (SSSSLSKENDNVDNNNTNNNNNNNNNNNNNNNNNNN). 4 helical membrane passes run 550-570 (TMNL…FLMV), 589-609 (FILI…LLVV), 645-665 (YIFL…NLFF), and 679-699 (NIST…SHIP). The segment at 732–888 (NNDNKNKIND…NNNEEDDEEE (157 aa)) is disordered. A compositionally biased stretch (basic and acidic residues) spans 735–744 (NKNKINDKSD). The span at 745 to 880 (NSNSITNNNN…NNNNNNNNNN (136 aa)) shows a compositional bias: low complexity. 3 helical membrane passes run 896 to 916 (FQIF…LIVL), 953 to 973 (VQFQ…LLLV), and 1025 to 1045 (CSVG…WMSI). Residues 1093–1499 (RLVQNTGSII…VFELQVPMKC (407 aa)) enclose the Histidine kinase domain. A compositionally biased stretch (basic residues) spans 1236 to 1257 (PIHHHRHHHRHHHHHHHHHHHH). Residues 1236–1410 (PIHHHRHHHR…INNNINNNNN (175 aa)) are disordered. Residues 1260–1274 (DDDDYDDDNDDDNNT) show a composition bias toward acidic residues. Basic and acidic residues predominate over residues 1286–1315 (LSDKIKDNQDENLELKKSNNDKIIENKENQ). Over residues 1316-1410 (ENNNNNNNNN…INNNINNNNN (95 aa)) the composition is skewed to low complexity. The Response regulatory 1 domain maps to 1541–1656 (KILVIDDNPN…QLTVLSQLLP (116 aa)). Residue Asp1592 is modified to 4-aspartylphosphate. 5 disordered regions span residues 1666 to 1702 (SNQN…NIDF), 1960 to 2022 (GNNS…NSSN), 2036 to 2121 (CKGD…DIIN), 2133 to 2183 (QQQL…VKSS), and 2218 to 2256 (NQLN…NNND). The span at 1676 to 1696 (SNGGGGGGGGGGGGGGGGGSG) shows a compositional bias: gly residues. Residues 1974–1985 (TNNNTTTTTTTT) show a composition bias toward low complexity. The span at 1986 to 2010 (QPKKSPILTSSNGSDKSEGSTGSNR) shows a compositional bias: polar residues. Low complexity predominate over residues 2054–2064 (DSSSSSSSSDS). A compositionally biased stretch (basic and acidic residues) spans 2065-2076 (HGQDDHSYRLED). 2 stretches are compositionally biased toward low complexity: residues 2078 to 2109 (SISS…SGIN) and 2133 to 2165 (QQQL…LPIP). A compositionally biased stretch (polar residues) spans 2169–2183 (INSSGASSGIKVKSS). The Response regulatory 2 domain maps to 2262–2383 (NILLVEDNLV…LLISLLKKLV (122 aa)). Asp2313 bears the 4-aspartylphosphate mark.

Activation probably requires transfer of a phosphate group between a histidine in the kinase core (transmitter) domain and an aspartate of the receiver domain.

The protein resides in the membrane. It carries out the reaction ATP + protein L-histidine = ADP + protein N-phospho-L-histidine.. Acts as a receptor histidine kinase for a signal transduction pathway. This protein undergoes an ATP-dependent autophosphorylation at a conserved histidine residue in the kinase core, and a phosphoryl group is then transferred to a conserved aspartate residue in the receiver domain. This is Hybrid signal transduction histidine kinase M (dhkM) from Dictyostelium discoideum (Social amoeba).